The primary structure comprises 276 residues: Glutamate 5-kinase (276 aa).

Residue Lys-14 participates in ATP binding. Substrate contacts are provided by Ser-54, Asp-141, and Asn-157. ATP is bound by residues 177–178 and 219–225; these read SD and TGGMLTK.

This sequence belongs to the glutamate 5-kinase family.

Its subcellular location is the cytoplasm. It catalyses the reaction L-glutamate + ATP = L-glutamyl 5-phosphate + ADP. The protein operates within amino-acid biosynthesis; L-proline biosynthesis; L-glutamate 5-semialdehyde from L-glutamate: step 1/2. Functionally, catalyzes the transfer of a phosphate group to glutamate to form L-glutamate 5-phosphate. This is Glutamate 5-kinase from Listeria monocytogenes serovar 1/2a (strain ATCC BAA-679 / EGD-e).